The sequence spans 829 residues: MVPAWLWLLCFSVPQALVEVSPTTLHVEVPENYGGNFPLYLTKLPWPHKEAGGRVVLSGDSGVAAEGPFSVEAESGFLLVTRALDREEQAEYQIQVTLEAEDGHVLWGPQSVTVHVKDENDQVPQFSQALYSARLSQGTRPGVPFLFLEASDGDEPGTANSDLRFHILSQTPAQPSPDVFRLEPRLGALALSPEGSAGFDHALEGPYQLLVQVKDMGDQASGHQATATVEISIVESTWTPLEPVHLAENLKVPYPHHLAQVHWSGGDVHYRLESQPPGPFDVDTEGKLYVTGELDREAQEQYVLQVQAQNSRGEDYAEPLELHVVVTDENDHAPVCPPRGPPVSVPELSPPGTAVTTLSAEDADAPGSPNSHVVYRLLSPEPQEGPEGGAFQLDPTSGSVSLGAAPLEAGQNMLLQVLAVDLAGAEAGLSSTCEVAVTVTDVNDHAPEFTSSQVGPVSLPEDTEPGTLVATLTATDADLEPAFRLMDFTIEAGDGEGTFGLDWEPDSGHVQLYLLKNLSYEAAPSHTVVVVVRNVVETVGPGPGPGATATVTVLVEKVMPPPRLEQKSYEADIPVNAPAGSFLLTIQPAEPWNGALRFSLVNDSEGWFCIQKVSGEVHTARPLQGARPGDSYTVLVEAQDADAPRLSTSAALVIHFLRAPPAPALPLAPMPSRHLCTPRQDHGVLIPAPSEDPDMATGHGPYSFALGPNPTVQRDWRLQPLNDSHAFLTLALHWVEPREHIVPVVVSQDARVWQLPVRVVVCRCNTEGECMRKVGRMKGMPTKLSAVGILVGTLAAIGFFLILIFTHLALARKKDLDAPADNVPLKAAA.

The first 18 residues, 1-18 (MVPAWLWLLCFSVPQALV), serve as a signal peptide directing secretion. At 19 to 786 (EVSPTTLHVE…MKGMPTKLSA (768 aa)) the chain is on the extracellular side. 6 Cadherin domains span residues 25–126 (LHVE…VPQF), 131–235 (YSAR…SIVE), 242–336 (EPVH…APVC), 341–449 (PPVS…APEF), 455–564 (GPVS…PPRL), and 569–665 (YEAD…APAL). N-linked (GlcNAc...) asparagine glycans are attached at residues N517, N602, and N722. Residues 666-786 (PLAPMPSRHL…MKGMPTKLSA (121 aa)) are ectodomain G. Residues 787-807 (VGILVGTLAAIGFFLILIFTH) traverse the membrane as a helical segment. Residues 808 to 829 (LALARKKDLDAPADNVPLKAAA) lie on the Cytoplasmic side of the membrane.

Kidney specific. Limited to the basolateral membranes of renal tubular epithelial cells.

Its subcellular location is the cell membrane. In terms of biological role, cadherins are calcium-dependent cell adhesion proteins. They preferentially interact with themselves in a homophilic manner in connecting cells; cadherins may thus contribute to the sorting of heterogeneous cell types. The polypeptide is Cadherin-16 (CDH16) (Oryctolagus cuniculus (Rabbit)).